Reading from the N-terminus, the 943-residue chain is Translation initiation factor IF-2 (943 aa).

The interval leucine 29–glutamate 357 is disordered. 5 stretches are compositionally biased toward basic and acidic residues: residues proline 69–serine 82, phenylalanine 112–asparagine 137, glutamine 145–asparagine 155, aspartate 163–alanine 196, and arginine 224–glutamine 253. Residues alanine 254–lysine 266 show a composition bias toward low complexity. Positions lysine 296 to lysine 309 are enriched in basic and acidic residues. The segment covering asparagine 313–lysine 332 has biased composition (low complexity). The region spanning glutamate 445–lysine 614 is the tr-type G domain. Residues glycine 454–threonine 461 form a G1 region. Glycine 454 to threonine 461 is a GTP binding site. The G2 stretch occupies residues glycine 479–histidine 483. A G3 region spans residues aspartate 500 to glycine 503. Residues aspartate 500 to histidine 504 and asparagine 554 to aspartate 557 contribute to the GTP site. Positions asparagine 554 to aspartate 557 are G4. A G5 region spans residues serine 590–lysine 592.

The protein belongs to the TRAFAC class translation factor GTPase superfamily. Classic translation factor GTPase family. IF-2 subfamily.

Its subcellular location is the cytoplasm. Its function is as follows. One of the essential components for the initiation of protein synthesis. Protects formylmethionyl-tRNA from spontaneous hydrolysis and promotes its binding to the 30S ribosomal subunits. Also involved in the hydrolysis of GTP during the formation of the 70S ribosomal complex. This Streptococcus thermophilus (strain CNRZ 1066) protein is Translation initiation factor IF-2.